The chain runs to 332 residues: D-2-hydroxyacid dehydrogenase (NAD(+)) (332 aa).

Active-site residues include Arg237 and Glu266. The active-site Proton donor is the His298.

The protein belongs to the D-isomer specific 2-hydroxyacid dehydrogenase family. Monomer.

The catalysed reaction is a (2R)-2-hydroxycarboxylate + NAD(+) = a 2-oxocarboxylate + NADH + H(+). It carries out the reaction (2R)-hydroxy-4-methylpentanoate + NAD(+) = 4-methyl-2-oxopentanoate + NADH + H(+). It participates in amino-acid degradation; L-leucine degradation. Involved in the reductive branch of L-leucine fermentation. Catalyzes the NADH-dependent reduction of 4-methyl-2-oxopentanoate (2-oxoisocaproate) to (R)-2-hydroxy-4-methylpentanoate ((R)-2-hydroxyisocaproate). For the reverse reaction, the enzyme accepts (R)- but not (S)-2-hydroxy-4-methylpentanoate. Can also use 2-oxopentanoate, 2-oxohexanoate and phenylpyruvate but not 2-oxoisovalerate and 2-oxobutyrate. Cannot use NADPH. The polypeptide is D-2-hydroxyacid dehydrogenase (NAD(+)) (Clostridioides difficile (Peptoclostridium difficile)).